Here is a 438-residue protein sequence, read N- to C-terminus: Thymidine phosphorylase (438 aa).

This sequence belongs to the thymidine/pyrimidine-nucleoside phosphorylase family. Homodimer.

It carries out the reaction thymidine + phosphate = 2-deoxy-alpha-D-ribose 1-phosphate + thymine. It functions in the pathway pyrimidine metabolism; dTMP biosynthesis via salvage pathway; dTMP from thymine: step 1/2. Its function is as follows. The enzymes which catalyze the reversible phosphorolysis of pyrimidine nucleosides are involved in the degradation of these compounds and in their utilization as carbon and energy sources, or in the rescue of pyrimidine bases for nucleotide synthesis. The protein is Thymidine phosphorylase of Sinorhizobium medicae (strain WSM419) (Ensifer medicae).